The primary structure comprises 289 residues: Early E1A protein (289 aa).

Residues 41 to 49 (PTLHELYDL) are interaction with RB1 in competition with E2F1. Residues 76-140 (EGIDLLTFPP…PSDDEDEEGE (65 aa)) are interaction with UBE2I. Positions 82-107 (TFPPAPGSPEPPHLSRQPEQPEQRAL) are disordered. Over residues 84-93 (PPAPGSPEPP) the composition is skewed to pro residues. A Phosphoserine; by host modification is found at Ser89. The PXLXP motif, interaction with host ZMYND11 signature appears at 113–117 (PNLVP). The LXCXE motif, interaction with host RB1 and TMEM173/STING signature appears at 122–126 (LTCHE). A zinc finger spans residues 154–174 (CRSCHYHRRNTGDPDIMCSLC). The tract at residues 186 to 240 (PVSEPEPEPEPEPEPARPTRRPKMAPAILRRPTSPVSRECNSSTDSCDSGPSNTP) is disordered. Residues Ser219 and Ser231 each carry the phosphoserine; by host modification. Residues 219–237 (SPVSRECNSSTDSCDSGPS) show a composition bias toward polar residues. A Bipartite nuclear localization signal motif is present at residues 258–289 (RVGGRRQAVECIEDLLNEPGQPLDLSCKRPRP). The PXDLS motif, CTBP-binding motif lies at 279-283 (PLDLS).

It belongs to the adenoviridae E1A protein family. As to quaternary structure, interacts with host UBE2I; this interaction interferes with polySUMOylation. Interacts with host RB1; this interaction induces the aberrant dissociation of RB1-E2F1 complex thereby disrupting the activity of RB1 and activating E2F1-regulated genes. Interacts with host ATF7; the interaction enhances ATF7-mediated viral transactivation activity which requires the zinc binding domains of both proteins. Isoform early E1A 32 kDa protein and isoform early E1A 26 kDa protein interact (via N-terminus) with CUL1 and E3 ubiquitin ligase RBX1; these interactions inhibit RBX1-CUL1-dependent elongation reaction of ubiquitin chains and attenuate ubiquitination of SCF(FBXW7) target proteins. Interacts (via PXLXP motif) with host ZMYND11/BS69 (via MYND-type zinc finger); this interaction inhibits E1A mediated transactivation. Interacts with host EP300; this interaction stimulates the acetylation of RB1 by recruiting EP300 and RB1 into a multimeric-protein complex. Interacts with host CTBP1 and CTBP2; this interaction seems to potentiate viral replication. Interacts with host DCAF7 (ref.16). Interacts with host DYRK1A. Interacts with host KPNA4; this interaction allows E1A import into the host nucleus. Interacts with host EP400; this interaction stabilizes MYC. Interacts with host TBP protein; this interaction probably disrupts the TBP-TATA complex. Interacts (via LXCXE motif) with host TMEM173/STING; this interaction impairs the ability of TMEM173/STING to sense cytosolic DNA and promote the production of type I interferon (IFN-alpha and IFN-beta). Interacts (via C-terminus) with host ZBED1/hDREF (via C-terminus); the interaction is direct.

Its subcellular location is the host nucleus. Plays a role in viral genome replication by driving entry of quiescent cells into the cell cycle. Stimulation of progression from G1 to S phase allows the virus to efficiently use the cellular DNA replicating machinery to achieve viral genome replication. E1A protein has both transforming and trans-activating activities. Induces the disassembly of the E2F1 transcription factor from RB1 by direct competition for the same binding site on RB1, with subsequent transcriptional activation of E2F1-regulated S-phase genes and of the E2 region of the adenoviral genome. Release of E2F1 leads to the ARF-mediated inhibition of MDM2 and causes TP53/p53 to accumulate because it is not targeted for degradation by MDM2-mediated ubiquitination anymore. This increase in TP53, in turn, would arrest the cell proliferation and direct its death but this effect is counteracted by the viral protein E1B-55K. Inactivation of the ability of RB1 to arrest the cell cycle is critical for cellular transformation, uncontrolled cellular growth and proliferation induced by viral infection. Interaction with RBX1 and CUL1 inhibits ubiquitination of the proteins targeted by SCF(FBXW7) ubiquitin ligase complex, and may be linked to unregulated host cell proliferation. The tumorigenesis-restraining activity of E1A may be related to the disruption of the host CtBP-CtIP complex through the CtBP binding motif. Interaction with host TMEM173/STING impairs the ability of TMEM173/STING to sense cytosolic DNA and promote the production of type I interferon (IFN-alpha and IFN-beta). Promotes the sumoylation of host ZBED1/hDREF with SUMO1. The protein is Early E1A protein of Homo sapiens (Human).